Reading from the N-terminus, the 261-residue chain is Pantothenate synthetase (261 aa).

29-36 is a binding site for ATP; the sequence is MGALHNGH. H36 serves as the catalytic Proton donor. Q60 contributes to the (R)-pantoate binding site. Q60 lines the beta-alanine pocket. 147–150 provides a ligand contact to ATP; it reads GEKD. (R)-pantoate is bound at residue Q153. 184-187 lines the ATP pocket; sequence LSSR.

Belongs to the pantothenate synthetase family. Homodimer.

It is found in the cytoplasm. The enzyme catalyses (R)-pantoate + beta-alanine + ATP = (R)-pantothenate + AMP + diphosphate + H(+). It participates in cofactor biosynthesis; (R)-pantothenate biosynthesis; (R)-pantothenate from (R)-pantoate and beta-alanine: step 1/1. Catalyzes the condensation of pantoate with beta-alanine in an ATP-dependent reaction via a pantoyl-adenylate intermediate. This Francisella tularensis subsp. holarctica (strain FTNF002-00 / FTA) protein is Pantothenate synthetase.